The sequence spans 123 residues: Large ribosomal subunit protein bL12 (123 aa).

Belongs to the bacterial ribosomal protein bL12 family. In terms of assembly, homodimer. Part of the ribosomal stalk of the 50S ribosomal subunit. Forms a multimeric L10(L12)X complex, where L10 forms an elongated spine to which 2 to 4 L12 dimers bind in a sequential fashion. Binds GTP-bound translation factors.

Functionally, forms part of the ribosomal stalk which helps the ribosome interact with GTP-bound translation factors. Is thus essential for accurate translation. This chain is Large ribosomal subunit protein bL12, found in Acinetobacter baumannii (strain AB307-0294).